The primary structure comprises 205 residues: Pyridoxal 5'-phosphate synthase subunit PdxT (205 aa).

54–56 is a binding site for L-glutamine; it reads GES. The active-site Nucleophile is the Cys-86. Residues Arg-118 and 147–148 each bind L-glutamine; that span reads IR. Catalysis depends on charge relay system residues His-183 and Glu-185.

The protein belongs to the glutaminase PdxT/SNO family. As to quaternary structure, in the presence of PdxS, forms a dodecamer of heterodimers. Only shows activity in the heterodimer.

It catalyses the reaction aldehydo-D-ribose 5-phosphate + D-glyceraldehyde 3-phosphate + L-glutamine = pyridoxal 5'-phosphate + L-glutamate + phosphate + 3 H2O + H(+). The enzyme catalyses L-glutamine + H2O = L-glutamate + NH4(+). The protein operates within cofactor biosynthesis; pyridoxal 5'-phosphate biosynthesis. Functionally, catalyzes the hydrolysis of glutamine to glutamate and ammonia as part of the biosynthesis of pyridoxal 5'-phosphate. The resulting ammonia molecule is channeled to the active site of PdxS. The polypeptide is Pyridoxal 5'-phosphate synthase subunit PdxT (Nitrosopumilus maritimus (strain SCM1)).